The following is a 188-amino-acid chain: Insulin-like peptide INSL6 (188 aa).

Positions 1 to 22 (MKQLCCSCLLWLGLLLAPFSQE) are cleaved as a signal peptide. 3 disulfide bridges follow: C33–C169, C45–C182, and C168–C173. Positions 53–158 (FSMEEQSPMT…SGLFWGNHPQ (106 aa)) are cleaved as a propeptide — connecting peptide.

Belongs to the insulin family. Testis and prostate specific.

The protein localises to the secreted. In terms of biological role, may have a role in sperm development and fertilization. In Rattus norvegicus (Rat), this protein is Insulin-like peptide INSL6 (Insl6).